Consider the following 335-residue polypeptide: Biotin synthase (335 aa).

Positions 46 to 274 (YDIQLASLFS…KSKIRLSAGR (229 aa)) constitute a Radical SAM core domain. [4Fe-4S] cluster-binding residues include C61, C65, and C68. [2Fe-2S] cluster contacts are provided by C105, C137, C197, and R269.

The protein belongs to the radical SAM superfamily. Biotin synthase family. Homodimer. [4Fe-4S] cluster serves as cofactor. It depends on [2Fe-2S] cluster as a cofactor.

It catalyses the reaction (4R,5S)-dethiobiotin + (sulfur carrier)-SH + 2 reduced [2Fe-2S]-[ferredoxin] + 2 S-adenosyl-L-methionine = (sulfur carrier)-H + biotin + 2 5'-deoxyadenosine + 2 L-methionine + 2 oxidized [2Fe-2S]-[ferredoxin]. It functions in the pathway cofactor biosynthesis; biotin biosynthesis; biotin from 7,8-diaminononanoate: step 2/2. Its function is as follows. Catalyzes the conversion of dethiobiotin (DTB) to biotin by the insertion of a sulfur atom into dethiobiotin via a radical-based mechanism. This Prochlorococcus marinus (strain MIT 9215) protein is Biotin synthase.